The sequence spans 2595 residues: Glucosylceramide transporter ABCA12 (2595 aa).

A helical transmembrane segment spans residues 23–43 (PLWTLVLILWPVIIFIILAIT). N-linked (GlcNAc...) asparagine glycans are attached at residues Asn-156, Asn-174, Asn-214, Asn-275, Asn-333, Asn-367, Asn-383, Asn-412, Asn-435, Asn-528, Asn-543, Asn-577, Asn-608, Asn-623, Asn-648, Asn-752, Asn-826, Asn-920, and Asn-963. 3 helical membrane passes run 1065-1085 (VSYS…AAFV), 1112-1132 (FAWL…LIII), and 1145-1165 (FILF…SYLI). The N-linked (GlcNAc...) asparagine glycan is linked to Asn-1170. 3 helical membrane-spanning segments follow: residues 1174–1194 (IAAL…IVLV), 1200–1220 (LSYV…SYAS), and 1250–1270 (FGWL…IAWY). The ABC transporter 1 domain maps to 1346 to 1577 (VALHGVTKIY…FGDGYHLTLT (232 aa)). 1378 to 1385 (GPNGAGKT) contributes to the ATP binding site. Asn-1524, Asn-1663, and Asn-1704 each carry an N-linked (GlcNAc...) asparagine glycan. A helical membrane pass occupies residues 1747-1767 (LIAQVILPIVFVTTAMGLGTL). N-linked (GlcNAc...) asparagine glycosylation is found at Asn-1769, Asn-1819, Asn-1835, Asn-1876, Asn-1921, and Asn-1952. The next 4 helical transmembrane spans lie at 1979–1999 (ATIS…GYSV), 2035–2055 (FIYD…IIAI), 2072–2092 (LLLL…AGLF), and 2103–2123 (VCVN…VYFL). Asn-2178 carries an N-linked (GlcNAc...) asparagine glycan. Residues 2187–2207 (GAMFVALVSQGTMFFSLRLLI) form a helical membrane-spanning segment. N-linked (GlcNAc...) asparagine glycosylation is found at Asn-2208 and Asn-2223. One can recognise an ABC transporter 2 domain in the interval 2254–2489 (VQLYCLTKTY…FGRGFTVKVH (236 aa)). Residues 2270–2290 (IIAVNNISIGIPAGECFGLLG) form a helical membrane-spanning segment. 2290-2297 (GVNGAGKT) is an ATP binding site. N-linked (GlcNAc...) asparagine glycosylation is found at Asn-2318, Asn-2542, and Asn-2547. The segment at 2571–2595 (SYETADTSSQGSTISVDSQDDQMES) is disordered. A compositionally biased stretch (polar residues) spans 2574 to 2587 (TADTSSQGSTISVD).

The protein belongs to the ABC transporter superfamily. ABCA family. As to quaternary structure, interacts with NR1H2 and ABCA1; this interaction is required for ABCA1 localization to the cell surface and is necessary for its normal activity and stability. As to expression, mainly expressed in the stomach, placenta, testis and fetal brain. Expressed in the upper epidermal layers, mainly the granular layers, of skin. Expressed throughout the normal interfollicular epidermis with prominent expression in the stratum granulosum. Expressed in alpha and beta cells of pancreatic islets.

It is found in the cytoplasmic vesicle. It localises to the secretory vesicle membrane. The protein resides in the golgi apparatus membrane. The catalysed reaction is ATP + H2O + phospholipidSide 1 = ADP + phosphate + phospholipidSide 2.. It catalyses the reaction a beta-D-glucosylceramide(in) + ATP + H2O = a beta-D-glucosylceramide(out) + ADP + phosphate + H(+). Transports lipids such as glucosylceramides from the outer to the inner leaflet of lamellar granules (LGs) membrane, whereby the lipids are finally transported to the keratinocyte periphery via the trans-Golgi network and LGs and released to the apical surface of the granular keratinocytes to form lipid lamellae in the stratum corneum of the epidermis, which is essential for skin barrier function. In the meantime, participates in the transport of the lamellar granules-associated proteolytic enzymes, in turn regulates desquamation and keratinocyte differentiation. Furthermore, is essential for the regulation of cellular cholesterol homeostasis by regulating ABCA1-dependent cholesterol efflux from macrophages through interaction with NR1H2 and ABCA1. Plays pleiotropic roles in regulating glucose stimulated insulin secretion from beta cells, regulating the morphology and fusion of insulin granules, lipid raft abundance and the actin cytoskeleton. Also involved in lung surfactant biogenesis. The chain is Glucosylceramide transporter ABCA12 from Homo sapiens (Human).